The sequence spans 109 residues: Defensin-B5 (109 aa).

Residues Met-1–Ala-20 form the signal peptide. The segment at Gln-21–Val-44 is disordered. The propeptide occupies Gln-21 to Leu-70. Basic and acidic residues predominate over residues Ser-34 to Val-44. 3 disulfides stabilise this stretch: Cys-73–Cys-101, Cys-80–Cys-95, and Cys-85–Cys-102. Residues Ala-107–Pro-109 constitute a propeptide that is removed on maturation.

It belongs to the beta-defensin family. In terms of tissue distribution, highly expressed in kidney, and expressed at lower levels in testis.

It localises to the secreted. Functionally, has antimicrobial activity. In Ornithorhynchus anatinus (Duckbill platypus), this protein is Defensin-B5.